Here is a 560-residue protein sequence, read N- to C-terminus: MSQQHTLPVTLSPALSQELLKTVPPPVNTQQEQMKQPTPLPPPCQKMPVELPVEVPSKQEEKHMTAVKGLPEQECEQQQQEPQEQELQQQHWEQHEEYQKAENPEQQLKQEKAQRDPQLNKQLEEEKKLLDQQLDQELVKRDEQLGMKKEQLLELPEQQEGHLKHLEQREGQLELPEQQEGQLKHLEQQKGQLELPEQQEGQLELPEQQEGQLKHLEQQEGQLKHLEHQEGQLEVPEEQVGQLKYLEQQEGQLKHLDQQEKQPELPEQQVGQLKHLEQQEGQPKHLEQQKGQLEHLEEQEGQLKHLEQQEGQLEHLEHQEGQLGLPEQQVQQLKQLEKEEGQPKHLEEEEGQLKHLVQQEGQLEHLVQQEGQLEHLVQQEGQLEQQEGQVEHLEQQVEHLEQLGQLKHLEEQEGQLKHLEQQQGQLGVPEQVGQPKNLEQEEKQLELPEQQEGQLKHLEKQEAQLELPEQQVGQPKHLEQQEKQLEPPEQQDGQLKHLEQQEGQLKDLEQQKGQLEQPVFAPAPGQVQDIQSALPTKGEVLLPLEHQQQKQEVQWPPKHK.

Polar residues predominate over residues 1-15; sequence MSQQHTLPVTLSPAL. 3 disordered regions span residues 1 to 131, 150 to 359, and 404 to 534; these read MSQQ…KLLD, EQLL…LVQQ, and GQLK…QSAL. Residues 76-91 are compositionally biased toward low complexity; it reads EQQQQEPQEQELQQQH. 2 stretches are compositionally biased toward basic and acidic residues: residues 92–115 and 159–172; these read WEQH…KAQR and QEGH…REGQ. A compositionally biased stretch (low complexity) spans 189–211; the sequence is QKGQLELPEQQEGQLELPEQQEG. Basic and acidic residues-rich tracts occupy residues 212-231, 252-264, and 274-320; these read QLKH…HQEG, QLKH…KQPE, and KHLE…EHQE. The segment covering 321–334 has biased composition (low complexity); sequence GQLGLPEQQVQQLK. Composition is skewed to basic and acidic residues over residues 335 to 353, 404 to 420, 454 to 463, 476 to 486, and 494 to 510; these read QLEK…EGQL, GQLK…KHLE, QLKHLEKQEA, KHLEQQEKQLE, and QLKH…DLEQ.

This sequence belongs to the involucrin family. As to quaternary structure, directly or indirectly cross-linked to cornifelin (CNFN). In terms of processing, substrate of transglutaminase. Specific glutamines or lysines are cross-linked to keratins, desmoplakin and to inter involucrin molecules. Keratinocytes of epidermis and other stratified squamous epithelia.

It is found in the cytoplasm. Part of the insoluble cornified cell envelope (CE) of stratified squamous epithelia. In Pan paniscus (Pygmy chimpanzee), this protein is Involucrin (IVL).